We begin with the raw amino-acid sequence, 334 residues long: Tryptophan--tRNA ligase (334 aa).

Residues 11 to 13 (QPS) and 19 to 20 (GN) each bind ATP. The short motif at 12–20 (PSGELTIGN) is the 'HIGH' region element. Asp135 is a binding site for L-tryptophan. Residues 147 to 149 (GED), Val186, and 195 to 199 (KMSKS) contribute to the ATP site. The 'KMSKS' region motif lies at 195 to 199 (KMSKS).

Belongs to the class-I aminoacyl-tRNA synthetase family. In terms of assembly, homodimer.

It localises to the cytoplasm. The catalysed reaction is tRNA(Trp) + L-tryptophan + ATP = L-tryptophyl-tRNA(Trp) + AMP + diphosphate + H(+). Functionally, catalyzes the attachment of tryptophan to tRNA(Trp). This chain is Tryptophan--tRNA ligase, found in Salmonella typhi.